Here is a 126-residue protein sequence, read N- to C-terminus: S-adenosylmethionine decarboxylase proenzyme (126 aa).

The active-site Schiff-base intermediate with substrate; via pyruvic acid is serine 63. The residue at position 63 (serine 63) is a Pyruvic acid (Ser); by autocatalysis. The active-site Proton acceptor; for processing activity is the histidine 68. Cysteine 83 serves as the catalytic Proton donor; for catalytic activity.

Belongs to the prokaryotic AdoMetDC family. Type 1 subfamily. In terms of assembly, heterotetramer of two alpha and two beta chains arranged as a dimer of alpha/beta heterodimers. The cofactor is pyruvate. Is synthesized initially as an inactive proenzyme. Formation of the active enzyme involves a self-maturation process in which the active site pyruvoyl group is generated from an internal serine residue via an autocatalytic post-translational modification. Two non-identical subunits are generated from the proenzyme in this reaction, and the pyruvate is formed at the N-terminus of the alpha chain, which is derived from the carboxyl end of the proenzyme. The post-translation cleavage follows an unusual pathway, termed non-hydrolytic serinolysis, in which the side chain hydroxyl group of the serine supplies its oxygen atom to form the C-terminus of the beta chain, while the remainder of the serine residue undergoes an oxidative deamination to produce ammonia and the pyruvoyl group blocking the N-terminus of the alpha chain.

The enzyme catalyses S-adenosyl-L-methionine + H(+) = S-adenosyl 3-(methylsulfanyl)propylamine + CO2. The protein operates within amine and polyamine biosynthesis; S-adenosylmethioninamine biosynthesis; S-adenosylmethioninamine from S-adenosyl-L-methionine: step 1/1. Functionally, catalyzes the decarboxylation of S-adenosylmethionine to S-adenosylmethioninamine (dcAdoMet), the propylamine donor required for the synthesis of the polyamines spermine and spermidine from the diamine putrescine. The chain is S-adenosylmethionine decarboxylase proenzyme from Syntrophomonas wolfei subsp. wolfei (strain DSM 2245B / Goettingen).